We begin with the raw amino-acid sequence, 509 residues long: Pentatricopeptide repeat-containing protein At2g13420, mitochondrial (509 aa).

Residues 1–19 (MLLLKQISPPFHLHQLRRR) constitute a mitochondrion transit peptide. PPR repeat units follow at residues 172–202 (RLVEFGFLLDTLCKYGYTKMAVGVFNERKEE), 206–240 (DEKVYTILIAGWCKLRRIDMAEKFLVEMIESGIEP), 241–285 (NVVT…GIEP), 286–320 (DVTSFSIVLHMYSRAHKAELTLDKMKLMKAKGISP), 321–355 (TIETYTSVVKCLCSCGRLEEAEELLETMVESGISP), 356–390 (SSATYNCFFKEYKGRKDANGAMNLYRKMKNGLCKP), 391–425 (STQTYNVLLGTFINLGKMETVKEIWDDLKASETGP), and 426–460 (DLDSYTSLVHGLCSKEKWKEACGYFVEMIERGFLP).

It belongs to the PPR family. P subfamily.

Its subcellular location is the mitochondrion. This chain is Pentatricopeptide repeat-containing protein At2g13420, mitochondrial, found in Arabidopsis thaliana (Mouse-ear cress).